A 273-amino-acid polypeptide reads, in one-letter code: SPRY domain-containing SOCS box protein 1 (273 aa).

Residue Tyr-31 is modified to Phosphotyrosine. The B30.2/SPRY domain occupies 33–231; it reads KPTRLDLLLD…IRMRYLNGLD (199 aa). The SOCS box domain occupies 232 to 273; the sequence is PEPLPLMDLCRRSVRLALGKGRLGEIHALPLPASLKAYLLYQ.

It belongs to the SPSB family. Component of the probable ECS(SPSB1) E3 ubiquitin-protein ligase complex which contains CUL5, RNF7/RBX2, Elongin BC complex and SPSB1. Interacts with CUL5, RNF7, ELOB and ELOC. Directly interacts with MET tyrosine kinase domain in the presence and in the absence of HGF, however HGF treatment has a positive effect on this interaction. When phosphorylated, interacts with RASA1 without affecting its stability. Interacts (via B30.2/SPRY domain) with PAWR; this interaction is direct and occurs in association with the Elongin BC complex. Interacts with NOS2 and EPHB2.

It is found in the cytoplasm. It localises to the cytosol. Its pathway is protein modification; protein ubiquitination. Functionally, substrate recognition component of a SCF-like ECS (Elongin BC-CUL2/5-SOCS-box protein) E3 ubiquitin-protein ligase complex which mediates the ubiquitination and subsequent proteasomal degradation of target proteins. Negatively regulates nitric oxide (NO) production and limits cellular toxicity in activated macrophages by mediating the ubiquitination and proteasomal degradation of NOS2. Acts as a bridge which links NOS2 with the ECS E3 ubiquitin ligase complex components ELOC and CUL5. The polypeptide is SPRY domain-containing SOCS box protein 1 (SPSB1) (Bos taurus (Bovine)).